The primary structure comprises 488 residues: Diacylglycerol kinase 3 (488 aa).

The disordered stretch occupies residues 1 to 24; it reads MDSPVSKTDASKEKFVASRPSTAD. The 159-residue stretch at 87-245 folds into the DAGKc domain; it reads APHAPMVVFI…SWKILVSMPS (159 aa).

It belongs to the eukaryotic diacylglycerol kinase family. Monomer.

It carries out the reaction a 1,2-diacyl-sn-glycerol + ATP = a 1,2-diacyl-sn-glycero-3-phosphate + ADP + H(+). Its function is as follows. Phosphorylates the second messenger diacylglycerol (DAG) to generate phosphatidic acid (PA), another important signaling molecule. PA is required for plant development and responses to abiotic stress and pathogen attack. May be involved in the accumulation of PA during cold stress. In Arabidopsis thaliana (Mouse-ear cress), this protein is Diacylglycerol kinase 3 (DGK3).